Here is a 306-residue protein sequence, read N- to C-terminus: Porphobilinogen deaminase (306 aa).

C244 is modified (S-(dipyrrolylmethanemethyl)cysteine).

The protein belongs to the HMBS family. In terms of assembly, monomer. Dipyrromethane is required as a cofactor.

It catalyses the reaction 4 porphobilinogen + H2O = hydroxymethylbilane + 4 NH4(+). It functions in the pathway porphyrin-containing compound metabolism; protoporphyrin-IX biosynthesis; coproporphyrinogen-III from 5-aminolevulinate: step 2/4. Tetrapolymerization of the monopyrrole PBG into the hydroxymethylbilane pre-uroporphyrinogen in several discrete steps. The sequence is that of Porphobilinogen deaminase from Streptococcus sanguinis (strain SK36).